The primary structure comprises 425 residues: Bifunctional phosphoribosylaminoimidazole carboxylase/phosphoribosylaminoimidazole succinocarboxamide synthetase (425 aa).

Position 2 is an N-acetylalanine (A2). Residues 2-260 (ATAEVLNIGR…WVADRVELLL (259 aa)) form an SAICAR synthetase domain region. At Y22 the chain carries Phosphotyrosine. S27 is subject to Phosphoserine. K36 is modified (N6-acetyllysine). Residue S107 is modified to Phosphoserine. T238 is modified (phosphothreonine). K247 is modified (N6-acetyllysine). Residues 261-266 (KSNSQC) form a linker region. Positions 267–425 (RVVVLMGSTS…ADKKIRECNL (159 aa)) are AIR carboxylase domain. Position 274 is a phosphoserine (S274). S332 serves as a coordination point for CO2.

In the N-terminal section; belongs to the SAICAR synthetase family. This sequence in the C-terminal section; belongs to the AIR carboxylase family. Class II subfamily. As to quaternary structure, homooctamer.

The catalysed reaction is 5-amino-1-(5-phospho-D-ribosyl)imidazole-4-carboxylate + L-aspartate + ATP = (2S)-2-[5-amino-1-(5-phospho-beta-D-ribosyl)imidazole-4-carboxamido]succinate + ADP + phosphate + 2 H(+). The enzyme catalyses 5-amino-1-(5-phospho-D-ribosyl)imidazole-4-carboxylate + H(+) = 5-amino-1-(5-phospho-beta-D-ribosyl)imidazole + CO2. Its pathway is purine metabolism; IMP biosynthesis via de novo pathway; 5-amino-1-(5-phospho-D-ribosyl)imidazole-4-carboxamide from 5-amino-1-(5-phospho-D-ribosyl)imidazole-4-carboxylate: step 1/2. It functions in the pathway purine metabolism; IMP biosynthesis via de novo pathway; 5-amino-1-(5-phospho-D-ribosyl)imidazole-4-carboxylate from 5-amino-1-(5-phospho-D-ribosyl)imidazole (carboxylase route): step 1/1. Bifunctional phosphoribosylaminoimidazole carboxylase and phosphoribosylaminoimidazole succinocarboxamide synthetase catalyzing two reactions of the de novo purine biosynthetic pathway. The sequence is that of Bifunctional phosphoribosylaminoimidazole carboxylase/phosphoribosylaminoimidazole succinocarboxamide synthetase from Rattus norvegicus (Rat).